The following is a 466-amino-acid chain: Glutamate decarboxylase beta (466 aa).

The substrate site is built by Thr62 and Asn83. Pyridoxal 5'-phosphate-binding positions include 126–127 (SS), Thr212, and His275. Lys276 bears the N6-(pyridoxal phosphate)lysine mark. 3 positions are modified to N6-acetyllysine: Lys446, Lys453, and Lys464.

It belongs to the group II decarboxylase family. In terms of assembly, homohexamer composed of three dimers. Requires pyridoxal 5'-phosphate as cofactor.

It carries out the reaction L-glutamate + H(+) = 4-aminobutanoate + CO2. Converts glutamate to gamma-aminobutyrate (GABA), consuming one intracellular proton in the reaction. The gad system helps to maintain a near-neutral intracellular pH when cells are exposed to extremely acidic conditions. The ability to survive transit through the acidic conditions of the stomach is essential for successful colonization of the mammalian host by commensal and pathogenic bacteria. This Shigella flexneri protein is Glutamate decarboxylase beta (gadB).